Consider the following 462-residue polypeptide: MQLRKMQTIKKEPAPLDPTSSSDKMLLLNSALAEVAEDLASGEDLLLNEGSMGKNKSSACRRKREFIPDEKKDAMYWEKRRKNNEAAKRSREKRRLNDLVLENKLIALGEENATLKAELLSLKLKFGLISSTAYAQEIQKLSNSTAVYFQDYQTSKAAVSSFVDEHEPAMVAGSCISVIKHSPQSSLSDVSEVSSVEHTQESPAQGGCRSPENKFPVIKQEPVELESFAREAREERGTYSTSIYQSYMGSSFSTYSHSPPLLQVHGSTSNSPRTSEADEGVVGKSSDGEDEQQVPKGPIHSPVELQRVHATVVKVPEVNPSALPHKLRIKAKAMQVKVEALDSEFEGMQKLSSPADAIAKRHFDLEKHGTSGMAHSSLPPFSVQVTNIQDWSLKSEHWHHKELSSKTQSSFKTGVVEVKDGGYKVSEAENLYLKQGIANLSAEVVSLKRFIATQPISASDSR.

Residues 1-22 (MQLRKMQTIKKEPAPLDPTSSS) are disordered. A Glycyl lysine isopeptide (Lys-Gly) (interchain with G-Cter in SUMO2) cross-link involves residue Lys-24. Residues 73–136 (DAMYWEKRRK…GLISSTAYAQ (64 aa)) enclose the bZIP domain. A basic motif region spans residues 79 to 95 (KRRKNNEAAKRSREKRR). Residues 99–106 (LVLENKLI) are leucine-zipper. The interval 188–214 (SDVSEVSSVEHTQESPAQGGCRSPENK) is disordered. Lys-214 is covalently cross-linked (Glycyl lysine isopeptide (Lys-Gly) (interchain with G-Cter in SUMO2)). Lys-219 participates in a covalent cross-link: Glycyl lysine isopeptide (Lys-Gly) (interchain with G-Cter in SUMO1); alternate. A Glycyl lysine isopeptide (Lys-Gly) (interchain with G-Cter in SUMO2); alternate cross-link involves residue Lys-219. Positions 259–298 (PPLLQVHGSTSNSPRTSEADEGVVGKSSDGEDEQQVPKGP) are disordered. The span at 265 to 274 (HGSTSNSPRT) shows a compositional bias: polar residues. The segment at 281-420 (VVGKSSDGED…FKTGVVEVKD (140 aa)) is necessary for transcriptional repression and sufficient for interaction with PER2. Phosphoserine is present on Ser-301. Residues Lys-314, Lys-326, Lys-332, Lys-337, and Lys-350 each participate in a glycyl lysine isopeptide (Lys-Gly) (interchain with G-Cter in SUMO2) cross-link. Ser-353 carries the post-translational modification Phosphoserine. Residues Lys-360, Lys-394, Lys-401, Lys-406, Lys-412, Lys-419, Lys-424, Lys-434, and Lys-448 each participate in a glycyl lysine isopeptide (Lys-Gly) (interchain with G-Cter in SUMO2) cross-link.

The protein belongs to the bZIP family. NFIL3 subfamily. In terms of assembly, homodimer. Binds DNA as a dimer. Interacts with DR1. Interacts with PER2 and CRY2. Interacts with NR0B2. Interacts with NR1D1. Interacts with MYSM1. As to expression, expressed in suprachiasmatic nucleus and liver (at protein level). Expressed in suprachiasmatic nucleus, hippocampus, gyrus dentatus, piriform cortex, internal granular layer of olfactory bulb, dorsomedial hypothalamic nucleus, pontine nuclei, granular layer of cerebellum, liver and calvariae osteoblasts. Expressed in natural killer cell precursors in bone marrow.

It localises to the nucleus. Functionally, acts as a transcriptional regulator that recognizes and binds to the sequence 5'-[GA]TTA[CT]GTAA[CT]-3', a sequence present in many cellular and viral promoters. Represses transcription from promoters with activating transcription factor (ATF) sites. Represses promoter activity in osteoblasts. Represses transcriptional activity of PER1. Represses transcriptional activity of PER2 via the B-site on the promoter. Activates transcription from the interleukin-3 promoter in T-cells. Competes for the same consensus-binding site with PAR DNA-binding factors (DBP, HLF and TEF). Component of the circadian clock that acts as a negative regulator for the circadian expression of PER2 oscillation in the cell-autonomous core clock. Protects pro-B cells from programmed cell death. Represses the transcription of CYP2A5. Positively regulates the expression and activity of CES2 by antagonizing the repressive action of NR1D1 on CES2. Required for the development of natural killer cell precursors. The polypeptide is Nuclear factor interleukin-3-regulated protein (Nfil3) (Mus musculus (Mouse)).